Reading from the N-terminus, the 280-residue chain is Tryptophan synthase alpha chain (280 aa).

Catalysis depends on proton acceptor residues Glu-50 and Asp-61.

Belongs to the TrpA family. Tetramer of two alpha and two beta chains.

The enzyme catalyses (1S,2R)-1-C-(indol-3-yl)glycerol 3-phosphate + L-serine = D-glyceraldehyde 3-phosphate + L-tryptophan + H2O. It participates in amino-acid biosynthesis; L-tryptophan biosynthesis; L-tryptophan from chorismate: step 5/5. Functionally, the alpha subunit is responsible for the aldol cleavage of indoleglycerol phosphate to indole and glyceraldehyde 3-phosphate. This chain is Tryptophan synthase alpha chain, found in Methylorubrum extorquens (strain CM4 / NCIMB 13688) (Methylobacterium extorquens).